The sequence spans 158 residues: 6,7-dimethyl-8-ribityllumazine synthase (158 aa).

5-amino-6-(D-ribitylamino)uracil-binding positions include phenylalanine 22, 57–59 (SYE), and 81–83 (TVI). Histidine 89 functions as the Proton donor in the catalytic mechanism. Phenylalanine 114 serves as a coordination point for 5-amino-6-(D-ribitylamino)uracil. Residue arginine 128 participates in (2S)-2-hydroxy-3-oxobutyl phosphate binding.

This sequence belongs to the DMRL synthase family. In terms of assembly, forms an icosahedral capsid composed of 60 subunits, arranged as a dodecamer of pentamers.

The catalysed reaction is (2S)-2-hydroxy-3-oxobutyl phosphate + 5-amino-6-(D-ribitylamino)uracil = 6,7-dimethyl-8-(1-D-ribityl)lumazine + phosphate + 2 H2O + H(+). Its pathway is cofactor biosynthesis; riboflavin biosynthesis; riboflavin from 2-hydroxy-3-oxobutyl phosphate and 5-amino-6-(D-ribitylamino)uracil: step 1/2. Functionally, catalyzes the formation of 6,7-dimethyl-8-ribityllumazine by condensation of 5-amino-6-(D-ribitylamino)uracil with 3,4-dihydroxy-2-butanone 4-phosphate. This is the penultimate step in the biosynthesis of riboflavin. This Blochmanniella pennsylvanica (strain BPEN) protein is 6,7-dimethyl-8-ribityllumazine synthase.